The chain runs to 1081 residues: FHIP family protein GA25918 (1081 aa).

Positions 1 to 11 (MSWLRSSPLRQ) are enriched in polar residues. Disordered regions lie at residues 1 to 31 (MSWLRSSPLRQSGNGGGGGVSTGHSSTGSLR), 504 to 524 (ARPKSVHEQQAPSGATGEQPI), 650 to 685 (ADEESDATDLTVTTTTASEADLEHNSSSVSSGMGGG), 830 to 913 (NENS…AASS), and 933 to 1027 (NNNN…SEPA). Ser508 bears the Phosphoserine mark. The segment covering 657–668 (TDLTVTTTTASE) has biased composition (low complexity). Phosphoserine is present on Ser833. Low complexity predominate over residues 840–856 (QPQTTLSQQQQQQQGQQ). Over residues 857–876 (RSAYATLSAATPVQATQTSA) the composition is skewed to polar residues. Composition is skewed to low complexity over residues 891–913 (SKSISSMFSRRSTPNPPSSAASS) and 933–953 (NNNNSGSGGQSQPFSSTGTGT). A compositionally biased stretch (polar residues) spans 954 to 963 (CETSLSTNPQ). Residues 964 to 993 (SGAAAARSTGTATTANGNSSNSNISIGGST) are compositionally biased toward low complexity. Residues 994 to 1010 (QTLSGHSNTTTYSSSTL) are compositionally biased toward polar residues.

It belongs to the FHIP family.

The sequence is that of FHIP family protein GA25918 from Drosophila pseudoobscura pseudoobscura (Fruit fly).